The chain runs to 262 residues: Biotin carboxyl carrier protein of acetyl-CoA carboxylase, chloroplastic (262 aa).

Residues 1 to 47 (MASSLAPATKAATNLRLTHSLRFSPKPNNLRFATKPGNTLLCTRVKA) constitute a chloroplast transit peptide. Disordered stretches follow at residues 53 to 84 (ALDSSSNATSPPMKAKSKEEPPAKPLAEPSSS) and 125 to 185 (IRKK…KSSL). Residues 132-160 (PQPPPAPQPSVVYSPPPPALPPPPVPAST) are compositionally biased toward pro residues. Positions 161 to 185 (PAPTLARATPTPTSAPAVKSAKSSL) are enriched in low complexity. One can recognise a Biotinyl-binding domain in the interval 185–261 (LPPLKSPMAG…SVDTPLFVIQ (77 aa)). K227 carries the post-translational modification N6-biotinyllysine.

Its subcellular location is the plastid. The protein resides in the chloroplast. It functions in the pathway lipid metabolism; fatty acid biosynthesis. This protein is a component of the acetyl coenzyme A carboxylase complex; first, biotin carboxylase catalyzes the carboxylation of the carrier protein and then the transcarboxylase transfers the carboxyl group to form malonyl-CoA. The protein is Biotin carboxyl carrier protein of acetyl-CoA carboxylase, chloroplastic (ACCB-1) of Glycine max (Soybean).